The primary structure comprises 484 residues: Glutamate mutase epsilon subunit (484 aa).

Position 66 (R66) interacts with L-glutamate. G68 is an adenosylcob(III)alamin binding site. R100 lines the L-glutamate pocket. Adenosylcob(III)alamin is bound at residue N123. L-glutamate contacts are provided by residues 149–150, E171, and Y177; that span reads RH. P180 is a binding site for adenosylcob(III)alamin. L-glutamate is bound at residue Y181. The adenosylcob(III)alamin site is built by F297, K326, E330, and I334.

The protein belongs to the methylaspartate mutase GlmE subunit family. In terms of assembly, heterotetramer composed of 2 epsilon subunits (GlmE) and 2 sigma subunits (GlmS). GlmE exists as a homodimer and GlmS as a monomer. The cofactor is adenosylcob(III)alamin.

It catalyses the reaction (2S,3S)-3-methyl-L-aspartate = L-glutamate. It participates in amino-acid degradation; L-glutamate degradation via mesaconate pathway; acetate and pyruvate from L-glutamate: step 1/4. In terms of biological role, catalyzes the carbon skeleton rearrangement of L-glutamate to L-threo-3-methylaspartate ((2S,3S)-3-methylaspartate). This Desulfitobacterium hafniense (strain Y51) protein is Glutamate mutase epsilon subunit.